A 123-amino-acid chain; its full sequence is Cytochrome b-c1 complex subunit 7 (123 aa).

Belongs to the UQCRB/QCR7 family. As to quaternary structure, component of the ubiquinol-cytochrome c oxidoreductase (cytochrome b-c1 complex, complex III, CIII), a multisubunit enzyme composed of 3 respiratory subunits cytochrome b, cytochrome c1 and Rieske protein, 2 core protein subunits, and additional low-molecular weight protein subunits. The complex exists as an obligatory dimer and forms supercomplexes (SCs) in the inner mitochondrial membrane with cytochrome c oxidase (complex IV, CIV). Post-translationally, the N-terminus is blocked.

The protein resides in the mitochondrion inner membrane. Its function is as follows. Component of the ubiquinol-cytochrome c oxidoreductase, a multisubunit transmembrane complex that is part of the mitochondrial electron transport chain which drives oxidative phosphorylation. The respiratory chain contains 3 multisubunit complexes succinate dehydrogenase (complex II, CII), ubiquinol-cytochrome c oxidoreductase (cytochrome b-c1 complex, complex III, CIII) and cytochrome c oxidase (complex IV, CIV), that cooperate to transfer electrons derived from NADH and succinate to molecular oxygen, creating an electrochemical gradient over the inner membrane that drives transmembrane transport and the ATP synthase. The cytochrome b-c1 complex catalyzes electron transfer from ubiquinol to cytochrome c, linking this redox reaction to translocation of protons across the mitochondrial inner membrane, with protons being carried across the membrane as hydrogens on the quinol. In the process called Q cycle, 2 protons are consumed from the matrix, 4 protons are released into the intermembrane space and 2 electrons are passed to cytochrome c. The sequence is that of Cytochrome b-c1 complex subunit 7 from Solanum tuberosum (Potato).